The sequence spans 104 residues: NADH-quinone oxidoreductase subunit K (104 aa).

Helical transmembrane passes span Val-4–Ala-24, Val-31–Phe-51, and Leu-67–Leu-87.

The protein belongs to the complex I subunit 4L family. NDH-1 is composed of 14 different subunits. Subunits NuoA, H, J, K, L, M, N constitute the membrane sector of the complex.

Its subcellular location is the cell membrane. It catalyses the reaction a quinone + NADH + 5 H(+)(in) = a quinol + NAD(+) + 4 H(+)(out). Functionally, NDH-1 shuttles electrons from NADH, via FMN and iron-sulfur (Fe-S) centers, to quinones in the respiratory chain. The immediate electron acceptor for the enzyme in this species is believed to be a menaquinone. Couples the redox reaction to proton translocation (for every two electrons transferred, four hydrogen ions are translocated across the cytoplasmic membrane), and thus conserves the redox energy in a proton gradient. In Bacillus cereus (strain G9842), this protein is NADH-quinone oxidoreductase subunit K.